Here is a 333-residue protein sequence, read N- to C-terminus: Meiotic recombination protein rec24 (333 aa).

It belongs to the MEI4L family. In terms of assembly, interacts with Rec7, as part of the meiotic recombination initiation complex.

Its subcellular location is the cytoplasm. It localises to the nucleus. Required for correct meiotic chromosome segregation and recombination. Accessory protein required for Rec12 activity, which is involved in formation of the double-strand breaks (DSBs) that initiate meiotic recombination. The chain is Meiotic recombination protein rec24 (rec24) from Schizosaccharomyces pombe (strain 972 / ATCC 24843) (Fission yeast).